A 114-amino-acid chain; its full sequence is Large ribosomal subunit protein bL19 (114 aa).

Belongs to the bacterial ribosomal protein bL19 family.

Functionally, this protein is located at the 30S-50S ribosomal subunit interface and may play a role in the structure and function of the aminoacyl-tRNA binding site. The sequence is that of Large ribosomal subunit protein bL19 from Clavibacter michiganensis subsp. michiganensis (strain NCPPB 382).